A 3023-amino-acid polypeptide reads, in one-letter code: Genome polyprotein (3023 aa).

Positions T132 to F274 constitute a Peptidase S30 domain. Residues H183, D192, and S225 each act as for P1 proteinase activity in the active site. The Involved in interaction with stylet and aphid transmission motif lies at K325 to C328. Positions P583–K585 match the Involved in virions binding and aphid transmission motif. The Peptidase C6 domain maps to M609–G731. Catalysis depends on for helper component proteinase activity residues C617 and H690. The 153-residue stretch at Q1202–E1354 folds into the Helicase ATP-binding domain. Residue G1215–S1222 participates in ATP binding. Positions D1304–H1307 match the DEFH box motif. Residues G1367 to S1532 form the Helicase C-terminal domain. A GxxxG motif motif is present at residues G1796–G1800. Positions K1856 to K1863 match the Nuclear localization signal motif. Y1878 bears the O-(5'-phospho-RNA)-tyrosine mark. Residue Y1878 is modified to O-UMP-tyrosine; transient. One can recognise a Peptidase C4 domain in the interval S2002–E2218. Active-site for nuclear inclusion protein A activity residues include H2047, D2082, and C2152. The 125-residue stretch at W2484–L2608 folds into the RdRp catalytic domain. T3006 is subject to Phosphothreonine.

The protein belongs to the potyviridae genome polyprotein family. In terms of assembly, interacts with host eIF4E protein (via cap-binding region); this interaction mediates the translation of the VPg-viral RNA conjugates. Part of a complex that comprises VPg, RNA, host EIF4E and EIF4G; this interaction mediates the translation of the VPg-viral RNA conjugates. VPg is uridylylated by the polymerase and is covalently attached to the 5'-end of the genomic RNA. This uridylylated form acts as a nucleotide-peptide primer for the polymerase. In terms of processing, potyviral RNA is expressed as two polyproteins which undergo post-translational proteolytic processing. Genome polyprotein is processed by NIa-pro, P1 and HC-pro proteinases resulting in the production of at least ten individual proteins. P3N-PIPO polyprotein is cleaved by P1 and HC-pro proteinases resulting in the production of three individual proteins. The P1 proteinase and the HC-pro cleave only their respective C-termini autocatalytically. 6K1 is essential for proper proteolytic separation of P3 from CI.

It is found in the host cytoplasmic vesicle. It localises to the host nucleus. Its subcellular location is the virion. The enzyme catalyses RNA(n) + a ribonucleoside 5'-triphosphate = RNA(n+1) + diphosphate. It catalyses the reaction Hydrolyzes glutaminyl bonds, and activity is further restricted by preferences for the amino acids in P6 - P1' that vary with the species of potyvirus, e.g. Glu-Xaa-Xaa-Tyr-Xaa-Gln-|-(Ser or Gly) for the enzyme from tobacco etch virus. The natural substrate is the viral polyprotein, but other proteins and oligopeptides containing the appropriate consensus sequence are also cleaved.. It carries out the reaction Hydrolyzes a Gly-|-Gly bond at its own C-terminus, commonly in the sequence -Tyr-Xaa-Val-Gly-|-Gly, in the processing of the potyviral polyprotein.. In terms of biological role, required for aphid transmission and also has proteolytic activity. Only cleaves a Gly-Gly dipeptide at its own C-terminus. Interacts with virions and aphid stylets. Acts as a suppressor of RNA-mediated gene silencing, also known as post-transcriptional gene silencing (PTGS), a mechanism of plant viral defense that limits the accumulation of viral RNAs. May have RNA-binding activity. Its function is as follows. Has helicase activity. It may be involved in replication. Functionally, indispensable for virus replication. Reduces the abundance of host transcripts related to jasmonic acid biosynthesis therefore altering the host defenses. In order to increase its own stability, decreases host protein degradation pathways. Indispensable for virus replication. In terms of biological role, mediates the cap-independent, EIF4E-dependent translation of viral genomic RNAs. Binds to the cap-binding site of host EIF4E and thus interferes with the host EIF4E-dependent mRNA export and translation. VPg-RNA directly binds EIF4E and is a template for transcription. Also forms trimeric complexes with EIF4E-EIF4G, which are templates for translation. Its function is as follows. Has RNA-binding and proteolytic activities. Main protease that processes most of the polyprotein cleavages. Functionally, an RNA-dependent RNA polymerase that plays an essential role in the virus replication. Involved in aphid transmission, cell-to-cell and systemis movement, encapsidation of the viral RNA and in the regulation of viral RNA amplification. The polypeptide is Genome polyprotein (Tobacco vein mottling virus (TVMV)).